We begin with the raw amino-acid sequence, 64 residues long: MGNIRQTHIKNIAFRLVENYGDVFTTDFDKNKLLVSQYTTIEGKVIRNRVAGYVTRKIRYPKLI.

It belongs to the eukaryotic ribosomal protein eS17 family.

This Methanococcoides burtonii (strain DSM 6242 / NBRC 107633 / OCM 468 / ACE-M) protein is Small ribosomal subunit protein eS17.